Consider the following 236-residue polypeptide: MPAYKRILLKLSGEALMGDDAFGINRATIVRMVEEIAEVTRMGVQVAVVIGGGNIFRGVAGGSVGMDRATADYMGMLATVMNALALGDTMDKAGLVARVMSAIGIERVVEPYVRPKALQYLEEGKVVVFAAGTGNPFFTTDTAAALRGAEIGAEIVLKATKVDGVYSADPKKDPEATRYTSITFDEVIGKNLEVMDATAFALCRDQKLPIKIFSIFKLGALRRVVMGEDEGTLVHV.

Residue 10-13 (KLSG) participates in ATP binding. G52 contacts UMP. ATP is bound by residues G53 and R57. Residues D72 and 133 to 140 (TGNPFFTT) contribute to the UMP site. ATP contacts are provided by T160, Y166, and D169.

Belongs to the UMP kinase family. As to quaternary structure, homohexamer.

The protein localises to the cytoplasm. The catalysed reaction is UMP + ATP = UDP + ADP. It participates in pyrimidine metabolism; CTP biosynthesis via de novo pathway; UDP from UMP (UMPK route): step 1/1. Its activity is regulated as follows. Inhibited by UTP. Functionally, catalyzes the reversible phosphorylation of UMP to UDP. In Polaromonas naphthalenivorans (strain CJ2), this protein is Uridylate kinase.